Consider the following 354-residue polypeptide: Allantoicase (354 aa).

This sequence belongs to the allantoicase family.

It carries out the reaction allantoate + H2O = (S)-ureidoglycolate + urea. Its pathway is nitrogen metabolism; (S)-allantoin degradation; (S)-ureidoglycolate from allantoate (aminidohydrolase route): step 1/1. Its function is as follows. Utilization of purines as secondary nitrogen sources, when primary sources are limiting. The sequence is that of Allantoicase (alc-1) from Neurospora crassa (strain ATCC 24698 / 74-OR23-1A / CBS 708.71 / DSM 1257 / FGSC 987).